The following is a 312-amino-acid chain: Acetyl-coenzyme A carboxylase carboxyl transferase subunit alpha (312 aa).

The CoA carboxyltransferase C-terminal domain maps to 36–286 (RLDKEVKSIY…KEYFLDALRT (251 aa)).

Belongs to the AccA family. As to quaternary structure, acetyl-CoA carboxylase is a heterohexamer composed of biotin carboxyl carrier protein (AccB), biotin carboxylase (AccC) and two subunits each of ACCase subunit alpha (AccA) and ACCase subunit beta (AccD).

The protein localises to the cytoplasm. The catalysed reaction is N(6)-carboxybiotinyl-L-lysyl-[protein] + acetyl-CoA = N(6)-biotinyl-L-lysyl-[protein] + malonyl-CoA. Its pathway is lipid metabolism; malonyl-CoA biosynthesis; malonyl-CoA from acetyl-CoA: step 1/1. Its function is as follows. Component of the acetyl coenzyme A carboxylase (ACC) complex. First, biotin carboxylase catalyzes the carboxylation of biotin on its carrier protein (BCCP) and then the CO(2) group is transferred by the carboxyltransferase to acetyl-CoA to form malonyl-CoA. This chain is Acetyl-coenzyme A carboxylase carboxyl transferase subunit alpha, found in Helicobacter pylori (strain HPAG1).